A 78-amino-acid polypeptide reads, in one-letter code: Small ribosomal subunit protein bS18B (78 aa).

It belongs to the bacterial ribosomal protein bS18 family. Part of the 30S ribosomal subunit. Forms a tight heterodimer with protein bS6.

Functionally, binds as a heterodimer with protein bS6 to the central domain of the 16S rRNA, where it helps stabilize the platform of the 30S subunit. This chain is Small ribosomal subunit protein bS18B, found in Streptomyces griseus subsp. griseus (strain JCM 4626 / CBS 651.72 / NBRC 13350 / KCC S-0626 / ISP 5235).